The primary structure comprises 371 residues: Queuine tRNA-ribosyltransferase (371 aa).

The active-site Proton acceptor is aspartate 90. Residues aspartate 90–phenylalanine 94, aspartate 144, glutamine 189, and glycine 215 contribute to the substrate site. The interval glycine 246–asparagine 252 is RNA binding. Aspartate 265 serves as the catalytic Nucleophile. An RNA binding; important for wobble base 34 recognition region spans residues threonine 270 to arginine 274. Residues cysteine 303, cysteine 305, cysteine 308, and histidine 334 each contribute to the Zn(2+) site.

The protein belongs to the queuine tRNA-ribosyltransferase family. Homodimer. Within each dimer, one monomer is responsible for RNA recognition and catalysis, while the other monomer binds to the replacement base PreQ1. Zn(2+) serves as cofactor.

It carries out the reaction 7-aminomethyl-7-carbaguanine + guanosine(34) in tRNA = 7-aminomethyl-7-carbaguanosine(34) in tRNA + guanine. The protein operates within tRNA modification; tRNA-queuosine biosynthesis. In terms of biological role, catalyzes the base-exchange of a guanine (G) residue with the queuine precursor 7-aminomethyl-7-deazaguanine (PreQ1) at position 34 (anticodon wobble position) in tRNAs with GU(N) anticodons (tRNA-Asp, -Asn, -His and -Tyr). Catalysis occurs through a double-displacement mechanism. The nucleophile active site attacks the C1' of nucleotide 34 to detach the guanine base from the RNA, forming a covalent enzyme-RNA intermediate. The proton acceptor active site deprotonates the incoming PreQ1, allowing a nucleophilic attack on the C1' of the ribose to form the product. After dissociation, two additional enzymatic reactions on the tRNA convert PreQ1 to queuine (Q), resulting in the hypermodified nucleoside queuosine (7-(((4,5-cis-dihydroxy-2-cyclopenten-1-yl)amino)methyl)-7-deazaguanosine). In Helicobacter pylori (strain P12), this protein is Queuine tRNA-ribosyltransferase.